An 85-amino-acid polypeptide reads, in one-letter code: uncharacterized protein (85 aa).

At Ser-22 the chain carries Phosphoserine.

The protein localises to the cytoplasm. It is found in the nucleus. This is an uncharacterized protein from Saccharomyces cerevisiae (strain ATCC 204508 / S288c) (Baker's yeast).